A 100-amino-acid polypeptide reads, in one-letter code: Urease subunit gamma (100 aa).

Belongs to the urease gamma subunit family. In terms of assembly, heterotrimer of UreA (gamma), UreB (beta) and UreC (alpha) subunits. Three heterotrimers associate to form the active enzyme.

It is found in the cytoplasm. It catalyses the reaction urea + 2 H2O + H(+) = hydrogencarbonate + 2 NH4(+). It functions in the pathway nitrogen metabolism; urea degradation; CO(2) and NH(3) from urea (urease route): step 1/1. This Proteus hauseri protein is Urease subunit gamma.